The chain runs to 210 residues: Large ribosomal subunit protein uL4 (210 aa).

The tract at residues 41–79 (MANARQGTASTKTRAEVRGGGRKPWRQKGTGRARAGSNR) is disordered. The segment covering 43–52 (NARQGTASTK) has biased composition (polar residues). Residues 60–71 (GGRKPWRQKGTG) show a composition bias toward basic residues.

Belongs to the universal ribosomal protein uL4 family. As to quaternary structure, part of the 50S ribosomal subunit.

One of the primary rRNA binding proteins, this protein initially binds near the 5'-end of the 23S rRNA. It is important during the early stages of 50S assembly. It makes multiple contacts with different domains of the 23S rRNA in the assembled 50S subunit and ribosome. Functionally, forms part of the polypeptide exit tunnel. This chain is Large ribosomal subunit protein uL4, found in Cyanothece sp. (strain PCC 7425 / ATCC 29141).